The following is a 171-amino-acid chain: Peptide deformylase (171 aa).

Fe cation is bound by residues cysteine 92 and histidine 134. Glutamate 135 is a catalytic residue. Residue histidine 138 participates in Fe cation binding.

It belongs to the polypeptide deformylase family. Fe(2+) is required as a cofactor.

The enzyme catalyses N-terminal N-formyl-L-methionyl-[peptide] + H2O = N-terminal L-methionyl-[peptide] + formate. In terms of biological role, removes the formyl group from the N-terminal Met of newly synthesized proteins. Requires at least a dipeptide for an efficient rate of reaction. N-terminal L-methionine is a prerequisite for activity but the enzyme has broad specificity at other positions. This is Peptide deformylase from Polynucleobacter necessarius subsp. necessarius (strain STIR1).